Consider the following 569-residue polypeptide: Arginine--tRNA ligase (569 aa).

The short motif at 128-138 is the 'HIGH' region element; that stretch reads ANPTGPLHVGH.

It belongs to the class-I aminoacyl-tRNA synthetase family. In terms of assembly, monomer.

It localises to the cytoplasm. The catalysed reaction is tRNA(Arg) + L-arginine + ATP = L-arginyl-tRNA(Arg) + AMP + diphosphate. The sequence is that of Arginine--tRNA ligase from Paracidovorax citrulli (strain AAC00-1) (Acidovorax citrulli).